The following is a 253-amino-acid chain: Ribosomal RNA small subunit methyltransferase J (253 aa).

Residues 101 to 102, 117 to 118, and Asp-169 contribute to the S-adenosyl-L-methionine site; these read RD and ER.

It belongs to the methyltransferase superfamily. RsmJ family.

It localises to the cytoplasm. It catalyses the reaction guanosine(1516) in 16S rRNA + S-adenosyl-L-methionine = N(2)-methylguanosine(1516) in 16S rRNA + S-adenosyl-L-homocysteine + H(+). Specifically methylates the guanosine in position 1516 of 16S rRNA. This chain is Ribosomal RNA small subunit methyltransferase J, found in Psychromonas ingrahamii (strain DSM 17664 / CCUG 51855 / 37).